The chain runs to 94 residues: Aspartyl/glutamyl-tRNA(Asn/Gln) amidotransferase subunit C (94 aa).

This sequence belongs to the GatC family. Heterotrimer of A, B and C subunits.

It catalyses the reaction L-glutamyl-tRNA(Gln) + L-glutamine + ATP + H2O = L-glutaminyl-tRNA(Gln) + L-glutamate + ADP + phosphate + H(+). The enzyme catalyses L-aspartyl-tRNA(Asn) + L-glutamine + ATP + H2O = L-asparaginyl-tRNA(Asn) + L-glutamate + ADP + phosphate + 2 H(+). Its function is as follows. Allows the formation of correctly charged Asn-tRNA(Asn) or Gln-tRNA(Gln) through the transamidation of misacylated Asp-tRNA(Asn) or Glu-tRNA(Gln) in organisms which lack either or both of asparaginyl-tRNA or glutaminyl-tRNA synthetases. The reaction takes place in the presence of glutamine and ATP through an activated phospho-Asp-tRNA(Asn) or phospho-Glu-tRNA(Gln). This chain is Aspartyl/glutamyl-tRNA(Asn/Gln) amidotransferase subunit C, found in Nitratidesulfovibrio vulgaris (strain ATCC 29579 / DSM 644 / CCUG 34227 / NCIMB 8303 / VKM B-1760 / Hildenborough) (Desulfovibrio vulgaris).